Consider the following 1299-residue polypeptide: DNA-directed RNA polymerase subunit beta' (1299 aa).

Positions 60, 62, 75, and 78 each coordinate Zn(2+). Residues Asp-535, Asp-537, and Asp-539 each coordinate Mg(2+). Zn(2+) contacts are provided by Cys-877, Cys-954, Cys-961, and Cys-964.

This sequence belongs to the RNA polymerase beta' chain family. The RNAP catalytic core consists of 2 alpha, 1 beta, 1 beta' and 1 omega subunit. When a sigma factor is associated with the core the holoenzyme is formed, which can initiate transcription. The cofactor is Mg(2+). Zn(2+) is required as a cofactor.

It carries out the reaction RNA(n) + a ribonucleoside 5'-triphosphate = RNA(n+1) + diphosphate. Its function is as follows. DNA-dependent RNA polymerase catalyzes the transcription of DNA into RNA using the four ribonucleoside triphosphates as substrates. The chain is DNA-directed RNA polymerase subunit beta' from Paenarthrobacter aurescens (strain TC1).